Reading from the N-terminus, the 162-residue chain is Caveolin-2 (162 aa).

Topologically, residues 1–86 are cytoplasmic; that stretch reads MGLETEKADV…FEISKYVIYK (86 aa). Position 19 is a phosphotyrosine; by SRC (Tyr-19). A phosphoserine mark is found at Ser-20 and Ser-23. Position 27 is a phosphotyrosine; by SRC (Tyr-27). Ser-36 is subject to Phosphoserine. Positions 87–107 form an intramembrane region, helical; it reads FLTLFLAIPLAFAAGILFATL. The Cytoplasmic segment spans residues 108-162; the sequence is SCLHIWIIMPFVKTCLMVLPSVQTIWKSITDVVIAPLCTSVGRSFSSVSLQLSHD.

The protein belongs to the caveolin family. Monomer or homodimer. Interacts with CAV1; the interaction forms a stable heterooligomeric complex that is required for targeting to lipid rafts and for caveolae formation. Tyrosine phosphorylated forms do not form heterooligomers with the Tyr-19-phosphorylated form existing as a monomer or dimer, and the Tyr-27-form as a monomer only. Interacts (tyrosine phosphorylated form) with the SH2 domain-containing proteins, RASA1, NCK1 and SRC. Interacts (tyrosine phosphorylated form) with INSR, the interaction (Tyr-27-phosphorylated form) is increased on insulin stimulation. Interacts (Tyr-19 phosphorylated form) with MAPK1 (phosphorylated form); the interaction, promoted by insulin, leads to nuclear location and MAPK1 activation. Interacts with STAT3; the interaction is increased on insulin-induced tyrosine phosphorylation leading to STAT activation. Phosphorylated on serine and tyrosine residues. CAV1 promotes phosphorylation on Ser-23 which then targets the complex to the plasma membrane, lipid rafts and caveolae. Phosphorylation on Ser-36 appears to modulate mitosis in endothelial cells. Phosphorylation on both Tyr-19 and Tyr-27 is required for insulin-induced 'Ser-727' phosphorylation of STAT3 and its activation. Phosphorylation on Tyr-19 is required for insulin-induced phosphorylation of MAPK1 and DNA binding of STAT3. Tyrosine phosphorylation is induced by both EGF and insulin (By. similarity).

The protein resides in the nucleus. The protein localises to the cytoplasm. It localises to the golgi apparatus membrane. It is found in the cell membrane. Its subcellular location is the membrane. The protein resides in the caveola. Functionally, may act as a scaffolding protein within caveolar membranes. Interacts directly with G-protein alpha subunits and can functionally regulate their activity. Acts as an accessory protein in conjunction with CAV1 in targeting to lipid rafts and driving caveolae formation. The Ser-36 phosphorylated form has a role in modulating mitosis in endothelial cells. Positive regulator of cellular mitogenesis of the MAPK signaling pathway. Required for the insulin-stimulated nuclear translocation and activation of MAPK1 and STAT3, and the subsequent regulation of cell cycle progression. This Neofelis nebulosa (Clouded leopard) protein is Caveolin-2 (CAV2).